We begin with the raw amino-acid sequence, 369 residues long: Chaperone protein DnaJ (369 aa).

Residues 3–67 (DHYEVLGVER…QQRQQYDRGG (65 aa)) enclose the J domain. A CR-type zinc finger spans residues 123 to 205 (GAHRDLEVDT…CQGQGRVRAR (83 aa)). Zn(2+) contacts are provided by C136, C139, C153, C156, C179, C182, C193, and C196. 4 CXXCXGXG motif repeats span residues 136-143 (CETCDGSC), 153-160 (CDICHGTG), 179-186 (CGSCRGYG), and 193-200 (CVTCQGQG).

This sequence belongs to the DnaJ family. Homodimer. The cofactor is Zn(2+).

Its subcellular location is the cytoplasm. In terms of biological role, participates actively in the response to hyperosmotic and heat shock by preventing the aggregation of stress-denatured proteins and by disaggregating proteins, also in an autonomous, DnaK-independent fashion. Unfolded proteins bind initially to DnaJ; upon interaction with the DnaJ-bound protein, DnaK hydrolyzes its bound ATP, resulting in the formation of a stable complex. GrpE releases ADP from DnaK; ATP binding to DnaK triggers the release of the substrate protein, thus completing the reaction cycle. Several rounds of ATP-dependent interactions between DnaJ, DnaK and GrpE are required for fully efficient folding. Also involved, together with DnaK and GrpE, in the DNA replication of plasmids through activation of initiation proteins. This Leifsonia xyli subsp. xyli (strain CTCB07) protein is Chaperone protein DnaJ.